Here is a 783-residue protein sequence, read N- to C-terminus: DNA ligase (783 aa).

NAD(+)-binding positions include aspartate 42–aspartate 46, serine 91–leucine 92, and glutamate 125. Lysine 127 acts as the N6-AMP-lysine intermediate in catalysis. NAD(+)-binding residues include arginine 148, glutamate 185, lysine 302, and lysine 326. Cysteine 421, cysteine 423, cysteine 445, and cysteine 451 together coordinate Zn(2+). One can recognise a BRCT domain in the interval lysine 705 to glycine 783.

This sequence belongs to the NAD-dependent DNA ligase family. LigA subfamily. Requires Mg(2+) as cofactor. Mn(2+) serves as cofactor.

It catalyses the reaction NAD(+) + (deoxyribonucleotide)n-3'-hydroxyl + 5'-phospho-(deoxyribonucleotide)m = (deoxyribonucleotide)n+m + AMP + beta-nicotinamide D-nucleotide.. Functionally, DNA ligase that catalyzes the formation of phosphodiester linkages between 5'-phosphoryl and 3'-hydroxyl groups in double-stranded DNA using NAD as a coenzyme and as the energy source for the reaction. It is essential for DNA replication and repair of damaged DNA. The sequence is that of DNA ligase from Caulobacter vibrioides (strain ATCC 19089 / CIP 103742 / CB 15) (Caulobacter crescentus).